Reading from the N-terminus, the 61-residue chain is Small ribosomal subunit protein uS14 (61 aa).

Cys-24, Cys-27, Cys-40, and Cys-43 together coordinate Zn(2+).

It belongs to the universal ribosomal protein uS14 family. Zinc-binding uS14 subfamily. Part of the 30S ribosomal subunit. Contacts proteins S3 and S10. The cofactor is Zn(2+).

In terms of biological role, binds 16S rRNA, required for the assembly of 30S particles and may also be responsible for determining the conformation of the 16S rRNA at the A site. The chain is Small ribosomal subunit protein uS14 from Mycobacterium sp. (strain JLS).